A 665-amino-acid chain; its full sequence is Syntabulin (665 aa).

Over residues 1-22 (MGPLRESKKEQRVQHQEKEISR) the composition is skewed to basic and acidic residues. Residues 1-271 (MGPLRESKKE…GVKPPNPEQY (271 aa)) are disordered. The tract at residues 2-421 (GPLRESKKEQ…DKLPDGLSLE (420 aa)) is sufficient for interaction with KIF5B. Residues 35–52 (PQQQQQQQNKVSPASESP) are compositionally biased toward low complexity. Phosphoserine is present on Ser-54. The span at 61–77 (FNPSSSGRSARTISSNS) shows a compositional bias: low complexity. A compositionally biased stretch (polar residues) spans 85-101 (CPSSQSVSPVKTPSDTG). Ser-111 is subject to Phosphoserine. Residues 141 to 162 (GGIIKPGSEADFSSSSSTGSIS) show a composition bias toward low complexity. The span at 168–180 (MSTTGNKRASFSR) shows a compositional bias: polar residues. Residues 225–245 (SYAPSSPSSSNSGSYKGSDCS) show a composition bias toward low complexity. A coiled-coil region spans residues 275-357 (LQQKEVTVRH…MRSSLADKDK (83 aa)). The tract at residues 314-421 (REDWIEEECH…DKLPDGLSLE (108 aa)) is sufficient for interaction with STX1A. 2 positions are modified to phosphoserine: Ser-400 and Ser-557. Residues 609–629 (FLVDLLAVAAPVVPTVLWAFS) form a helical membrane-spanning segment.

Interacts with STX1A and KIF5B.

The protein resides in the golgi apparatus membrane. Part of a kinesin motor-adapter complex that is critical for the anterograde axonal transport of active zone components and contributes to activity-dependent presynaptic assembly during neuronal development. This chain is Syntabulin (Sybu), found in Mus musculus (Mouse).